A 43-amino-acid chain; its full sequence is Cytochrome b559 subunit beta (43 aa).

Residues 18-34 (WLAIHGLAIPTVFFLGG) traverse the membrane as a helical segment. H22 contacts heme.

This sequence belongs to the PsbE/PsbF family. In terms of assembly, heterodimer of an alpha subunit and a beta subunit. PSII is composed of 1 copy each of membrane proteins PsbA, PsbB, PsbC, PsbD, PsbE, PsbF, PsbH, PsbI, PsbJ, PsbK, PsbL, PsbM, PsbT, PsbX, PsbY, PsbZ, Psb30/Ycf12, at least 3 peripheral proteins of the oxygen-evolving complex and a large number of cofactors. It forms dimeric complexes. It depends on heme b as a cofactor.

Its subcellular location is the plastid. It is found in the chloroplast thylakoid membrane. Functionally, this b-type cytochrome is tightly associated with the reaction center of photosystem II (PSII). PSII is a light-driven water:plastoquinone oxidoreductase that uses light energy to abstract electrons from H(2)O, generating O(2) and a proton gradient subsequently used for ATP formation. It consists of a core antenna complex that captures photons, and an electron transfer chain that converts photonic excitation into a charge separation. This is Cytochrome b559 subunit beta from Phaeodactylum tricornutum (strain CCAP 1055/1).